Here is a 346-residue protein sequence, read N- to C-terminus: Phosphoribosylformylglycinamidine cyclo-ligase (346 aa).

The protein belongs to the AIR synthase family.

It localises to the cytoplasm. The catalysed reaction is 2-formamido-N(1)-(5-O-phospho-beta-D-ribosyl)acetamidine + ATP = 5-amino-1-(5-phospho-beta-D-ribosyl)imidazole + ADP + phosphate + H(+). The protein operates within purine metabolism; IMP biosynthesis via de novo pathway; 5-amino-1-(5-phospho-D-ribosyl)imidazole from N(2)-formyl-N(1)-(5-phospho-D-ribosyl)glycinamide: step 2/2. The polypeptide is Phosphoribosylformylglycinamidine cyclo-ligase (Photorhabdus laumondii subsp. laumondii (strain DSM 15139 / CIP 105565 / TT01) (Photorhabdus luminescens subsp. laumondii)).